Here is a 104-residue protein sequence, read N- to C-terminus: uncharacterized protein (104 aa).

A helical transmembrane segment spans residues 72–92 (LIFSHNIVIIVSPIYMISFII).

Its subcellular location is the membrane. This is an uncharacterized protein from Saccharomyces cerevisiae (strain ATCC 204508 / S288c) (Baker's yeast).